The following is a 302-amino-acid chain: Uroporphyrinogen-III synthase, chloroplastic (302 aa).

The tract at residues Met1–Ile39 is disordered. The N-terminal 50 residues, Met1–Val50, are a transit peptide targeting the chloroplast.

This sequence belongs to the uroporphyrinogen-III synthase family.

The protein localises to the plastid. It is found in the chloroplast. The enzyme catalyses hydroxymethylbilane = uroporphyrinogen III + H2O. Its pathway is porphyrin-containing compound metabolism; protoporphyrin-IX biosynthesis; coproporphyrinogen-III from 5-aminolevulinate: step 3/4. In terms of biological role, catalyzes cyclization of the linear tetrapyrrole, hydroxymethylbilane, to the macrocyclic uroporphyrinogen III, a precursor of tetrapyrroles such as chlorophyll, heme and phycobilins. This Oryza sativa subsp. japonica (Rice) protein is Uroporphyrinogen-III synthase, chloroplastic (UROS).